The chain runs to 217 residues: 3,4-dihydroxy-2-butanone 4-phosphate synthase (217 aa).

D-ribulose 5-phosphate contacts are provided by residues 37 to 38 (RE), Asp42, 150 to 154 (RRGHT), and Glu174. Glu38 contacts Mg(2+). His153 is a Mg(2+) binding site.

This sequence belongs to the DHBP synthase family. In terms of assembly, homodimer. The cofactor is Mg(2+). Requires Mn(2+) as cofactor.

The catalysed reaction is D-ribulose 5-phosphate = (2S)-2-hydroxy-3-oxobutyl phosphate + formate + H(+). Its pathway is cofactor biosynthesis; riboflavin biosynthesis; 2-hydroxy-3-oxobutyl phosphate from D-ribulose 5-phosphate: step 1/1. Catalyzes the conversion of D-ribulose 5-phosphate to formate and 3,4-dihydroxy-2-butanone 4-phosphate. The protein is 3,4-dihydroxy-2-butanone 4-phosphate synthase of Tolumonas auensis (strain DSM 9187 / NBRC 110442 / TA 4).